The chain runs to 218 residues: Small ribosomal subunit protein uS3c (218 aa).

The KH type-2 domain maps to 47-118 (VQKHMRVSSG…RLNIAITRVA (72 aa)).

Belongs to the universal ribosomal protein uS3 family. As to quaternary structure, part of the 30S ribosomal subunit.

The protein resides in the plastid. Its subcellular location is the chloroplast. This is Small ribosomal subunit protein uS3c (rps3) from Illicium oligandrum (Star anise).